A 355-amino-acid chain; its full sequence is Peptide chain release factor 1 (355 aa).

An N5-methylglutamine modification is found at Q231.

The protein belongs to the prokaryotic/mitochondrial release factor family. In terms of processing, methylated by PrmC. Methylation increases the termination efficiency of RF1.

The protein resides in the cytoplasm. Its function is as follows. Peptide chain release factor 1 directs the termination of translation in response to the peptide chain termination codons UAG and UAA. This chain is Peptide chain release factor 1, found in Sulfurovum sp. (strain NBC37-1).